Reading from the N-terminus, the 748-residue chain is Catalase-peroxidase (748 aa).

A cross-link (tryptophyl-tyrosyl-methioninium (Trp-Tyr) (with M-264)) is located at residues 92–238 (WHSAGTYRTG…LAAVQMGLIY (147 aa)). The Proton acceptor role is filled by H93. The segment at residues 238 to 264 (YVNPEGPDGNPDPLLAAKDIRDTFGRM) is a cross-link (tryptophyl-tyrosyl-methioninium (Tyr-Met) (with W-92)). H279 lines the heme b pocket.

It belongs to the peroxidase family. Peroxidase/catalase subfamily. Homodimer or homotetramer. It depends on heme b as a cofactor. In terms of processing, formation of the three residue Trp-Tyr-Met cross-link is important for the catalase, but not the peroxidase activity of the enzyme.

The catalysed reaction is H2O2 + AH2 = A + 2 H2O. It catalyses the reaction 2 H2O2 = O2 + 2 H2O. In terms of biological role, bifunctional enzyme with both catalase and broad-spectrum peroxidase activity. In Xanthomonas campestris pv. campestris (strain 8004), this protein is Catalase-peroxidase.